Consider the following 594-residue polypeptide: Aspartate--tRNA(Asp/Asn) ligase (594 aa).

Glutamate 175 lines the L-aspartate pocket. Residues 199–202 (QQLK) are aspartate. Arginine 221 contacts L-aspartate. ATP-binding positions include 221-223 (RDE) and glutamine 230. Histidine 450 contributes to the L-aspartate binding site. An ATP-binding site is contributed by glutamate 485. Arginine 492 is an L-aspartate binding site. 537-540 (GIDR) is a binding site for ATP.

Belongs to the class-II aminoacyl-tRNA synthetase family. Type 1 subfamily. Homodimer.

It localises to the cytoplasm. The enzyme catalyses tRNA(Asx) + L-aspartate + ATP = L-aspartyl-tRNA(Asx) + AMP + diphosphate. Its function is as follows. Aspartyl-tRNA synthetase with relaxed tRNA specificity since it is able to aspartylate not only its cognate tRNA(Asp) but also tRNA(Asn). Reaction proceeds in two steps: L-aspartate is first activated by ATP to form Asp-AMP and then transferred to the acceptor end of tRNA(Asp/Asn). The sequence is that of Aspartate--tRNA(Asp/Asn) ligase from Herpetosiphon aurantiacus (strain ATCC 23779 / DSM 785 / 114-95).